The following is a 548-amino-acid chain: MSGNAIASTETEMEADHGNDPATGYEVIFRNTPLAICHLRNRAFVRCNTRFEELFGYARGELDNKSVRLLYPTDESFRTIGENYGHFFERHDTFKDERPIIRKDGSVIWCIVTGSLLDSSNPRLGSIWVVQDISEHKRTEDDLKASVEKLEILVHQRTLELHKHVNKLEQEVATRKLAEEVANEHREKYEKLFHMLPIGISITDNEGRILEANRQFTELVGTPEKPPITWQQLPQRFFLSDGTKVARKRLPWRIHDVQKDSIKNIEIGMREEESRKQRWLSVSSSLLELKGQKMVVAAFTDITYRKRIEELERLRHAELTRLGRINAMAGMAAALAHQMGQPLVSALNYLQGCRLRLEHIRGAAEISQSLGLAITHLDQAGEILRRVKDFVCKHTPERTPENINEVIQDTLSFLSFDVHRHNVTVNLQLIPSPPAVPLCKIEIQQVLFNLVKNGIEAMSEMEPESRILTIGNEISTDGRSMKIFVQDHGVGVEKRAEKRAFEPYFTTKPDGLGIGLTICRSIIESHGGELSFSKTGERGSKFQFTLPI.

In terms of domain architecture, PAS 1 spans 20–89; it reads DPATGYEVIF…IGENYGHFFE (70 aa). Positions 94–145 constitute a PAC 1 domain; sequence FKDERPIIRKDGSVIWCIVTGSLLDSSNPRLGSIWVVQDISEHKRTEDDLKA. The PAS 2 domain maps to 185–256; that stretch reads HREKYEKLFH…RKRLPWRIHD (72 aa). Residues 263 to 314 enclose the PAC 2 domain; sequence KNIEIGMREEESRKQRWLSVSSSLLELKGQKMVVAAFTDITYRKRIEELERL. Residues 334-548 form the Histidine kinase domain; that stretch reads ALAHQMGQPL…GSKFQFTLPI (215 aa). The residue at position 337 (His-337) is a Phosphohistidine; by autocatalysis.

Post-translationally, autophosphorylated.

It catalyses the reaction ATP + protein L-histidine = ADP + protein N-phospho-L-histidine.. Functionally, member of the two-component regulatory system TdiR/TdiS, which probably regulates transcription of toluene catabolic genes (bss operon). May activate TdiR by phosphorylation. In Thauera aromatica, this protein is Sensor protein TdiS (tdiS).